Consider the following 692-residue polypeptide: Elongation factor G (692 aa).

A tr-type G domain is found at 8-282; the sequence is ENTRNIGIMA…GVVDYLPSPL (275 aa). GTP-binding positions include 17–24, 81–85, and 135–138; these read AHIDAGKT, DTPGH, and NKMD.

The protein belongs to the TRAFAC class translation factor GTPase superfamily. Classic translation factor GTPase family. EF-G/EF-2 subfamily.

Its subcellular location is the cytoplasm. Its function is as follows. Catalyzes the GTP-dependent ribosomal translocation step during translation elongation. During this step, the ribosome changes from the pre-translocational (PRE) to the post-translocational (POST) state as the newly formed A-site-bound peptidyl-tRNA and P-site-bound deacylated tRNA move to the P and E sites, respectively. Catalyzes the coordinated movement of the two tRNA molecules, the mRNA and conformational changes in the ribosome. The polypeptide is Elongation factor G (Geobacillus thermodenitrificans (strain NG80-2)).